The sequence spans 290 residues: Arginine N-acetyltransferase avaD (290 aa).

157–163 (NQAHFEA) is a binding site for acetyl-CoA.

Belongs to the acetyltransferase family. GCN5 subfamily.

Its pathway is secondary metabolite metabolism. Functionally, arginine N-acetyltransferase; part of the cluster that mediates the biosynthesis of a highly modified cyclo-arginine-tryptophan dipeptide (cRW). Within the pathway, avaD catalyzes the N-acetylation of the guanidine group. The first step of the pathway is perfornmed by the arginine-containing cyclodipeptide synthase (RCPDS) avaA that acts as the scaffold-generating enzyme and is responsible for formation of the cyclo-Arg-Trp (cRW) diketopiperazine. AvaB then acts as a multifunctional flavoenzyme that is responsible for generating the cyclo-Arg-formylkynurenine DKP, which can be deformylated by avaC. AvaB then further catalyzes an additional N-oxidation followed by cyclization and dehydration. The next step is an N-acetylation of the guanidine group catalyzed by the arginine N-acetyltransferase avaD. The roles of the additional enzymes identified within the ava cluster still have to be determined. In Aspergillus versicolor, this protein is Arginine N-acetyltransferase avaD.